Reading from the N-terminus, the 640-residue chain is SH3 domain-containing protein 21 (640 aa).

Residues 1 to 60 (MVQSELQLQPRAGGRAEAASWGDRGNDKGGLGNPDMPSVSPGPQRPPKLSSLAYDSPPDY) form a disordered region. The SH3 domain occupies 65-126 (SHPEVYRVLF…PDNFVLPPPP (62 aa)). Disordered stretches follow at residues 133-361 (RKVV…PLGD), 401-551 (YFVA…PDSQ), and 618-640 (VQVM…TQTY). The span at 177–186 (PSRDSQKLTS) shows a compositional bias: basic and acidic residues. The span at 210-220 (TQTPQQRSVSS) shows a compositional bias: polar residues. Basic and acidic residues-rich tracts occupy residues 401–416 (YFVA…EAHT), 459–469 (ALEKPHPHEEA), and 494–532 (RPLR…EVPP). Positions 572–626 (VDVTSLRGEVESLRRALELMEVQLERKLTDIWEELKSEKEQRRRLEVQVMQGTQK) form a coiled coil. Positions 621–640 (MQGTQKSQTPRVIHTQTQTY) are enriched in polar residues.

The sequence is that of SH3 domain-containing protein 21 (SH3D21) from Homo sapiens (Human).